The primary structure comprises 331 residues: Probable transaldolase (331 aa).

Residue lysine 142 is the Schiff-base intermediate with substrate of the active site.

It belongs to the transaldolase family. Type 1 subfamily. In terms of assembly, homodimer.

It is found in the cytoplasm. It carries out the reaction D-sedoheptulose 7-phosphate + D-glyceraldehyde 3-phosphate = D-erythrose 4-phosphate + beta-D-fructose 6-phosphate. The protein operates within carbohydrate degradation; pentose phosphate pathway; D-glyceraldehyde 3-phosphate and beta-D-fructose 6-phosphate from D-ribose 5-phosphate and D-xylulose 5-phosphate (non-oxidative stage): step 2/3. Transaldolase is important for the balance of metabolites in the pentose-phosphate pathway. This is Probable transaldolase from Drosophila melanogaster (Fruit fly).